Consider the following 549-residue polypeptide: Oxygen-dependent choline dehydrogenase (549 aa).

Residue 4 to 33 (DFVIIGSGSAGSAMASRLSEDGKHTVIVLE) coordinates FAD. Histidine 465 serves as the catalytic Proton acceptor.

This sequence belongs to the GMC oxidoreductase family. FAD is required as a cofactor.

It catalyses the reaction choline + A = betaine aldehyde + AH2. It carries out the reaction betaine aldehyde + NAD(+) + H2O = glycine betaine + NADH + 2 H(+). It participates in amine and polyamine biosynthesis; betaine biosynthesis via choline pathway; betaine aldehyde from choline (cytochrome c reductase route): step 1/1. Involved in the biosynthesis of the osmoprotectant glycine betaine. Catalyzes the oxidation of choline to betaine aldehyde and betaine aldehyde to glycine betaine at the same rate. The polypeptide is Oxygen-dependent choline dehydrogenase (Rhizobium rhizogenes (strain K84 / ATCC BAA-868) (Agrobacterium radiobacter)).